Here is a 52-residue protein sequence, read N- to C-terminus: Mating pheromone En-1 (52 aa).

Disulfide bonds link cysteine 11–cysteine 37, cysteine 23–cysteine 33, cysteine 30–cysteine 52, and cysteine 34–cysteine 46.

Its subcellular location is the secreted. In terms of biological role, mating ciliate pheromones (or gamones) are diffusible extracellular communication signals that distinguish different intraspecific classes of cells commonly referred to as 'mating types'. They prepare the latter for conjugation by changing their cell surface properties. The protein is Mating pheromone En-1 of Euplotes nobilii (Ciliate).